The chain runs to 277 residues: UPF0276 protein PP_2398 (277 aa).

It belongs to the UPF0276 family.

The polypeptide is UPF0276 protein PP_2398 (Pseudomonas putida (strain ATCC 47054 / DSM 6125 / CFBP 8728 / NCIMB 11950 / KT2440)).